Reading from the N-terminus, the 305-residue chain is Insulin-like peptide (305 aa).

Residues 1 to 22 form the signal peptide; that stretch reads MNLSSVYVLASLAVVCLLVKET. 3 cysteine pairs are disulfide-bonded: Cys-28–Cys-87, Cys-40–Cys-100, and Cys-86–Cys-91. Residues 52–76 constitute a propeptide, connecting peptide; it reads SVSKRAIDFISEQQAKDYMGAMPHI. The interval 102–114 is d; that stretch reads PYSTAPATATPVR. Residues 102 to 305 constitute a propeptide, d/E peptide; sequence PYSTAPATAT…RDSYHLTELR (204 aa). Residues 107-118 show a composition bias toward low complexity; it reads PATATPVRTTEP. Disordered stretches follow at residues 107–130 and 236–305; these read PATA…PLDG and HNQT…TELR. The interval 115–305 is e; sequence TTEPQPEEAE…RDSYHLTELR (191 aa). The segment covering 119-128 has biased composition (acidic residues); sequence QPEEAEDDPL. 2 stretches are compositionally biased toward basic and acidic residues: residues 236–245 and 291–305; these read HNQTDKKEPT and RRIE…TELR.

It belongs to the insulin family.

The protein localises to the secreted. This is Insulin-like peptide (ILP) from Branchiostoma californiense (California lancelet).